The primary structure comprises 53 residues: Photoreceptor disk component PRCD (53 aa).

C2 carries S-palmitoyl cysteine lipidation. The disordered stretch occupies residues 24 to 53 (PEPSRVDGTVVGSGSDTDLQSTGREKGPVK). Residues 35–45 (GSGSDTDLQST) are compositionally biased toward polar residues.

The protein belongs to the PRCD family. In terms of assembly, interacts with RHO/rhodopsin; the interaction promotes PRCD stability. Post-translationally, palmitoylated at Cys-2. Palmitoylation is essential for protein stability and trafficking to the photoreceptor outer segment, but does not appear to be essential for membrane localization. Probably palmitoylated by ZDHHC3. Phosphorylated. Expressed in retina, where it localizes to both rod and cone photoreceptors (at protein level).

The protein localises to the cell projection. It is found in the cilium. It localises to the photoreceptor outer segment. The protein resides in the membrane. Its subcellular location is the endoplasmic reticulum. The protein localises to the golgi apparatus. Involved in vision. The sequence is that of Photoreceptor disk component PRCD from Mus musculus (Mouse).